Here is a 1203-residue protein sequence, read N- to C-terminus: Cingulin (1203 aa).

The segment at 7 to 357 (MAEPRGPVDH…VMISSGSTKA (351 aa)) is head. The disordered stretch occupies residues 25 to 48 (EPVSGAEMGTLRRGGRRPAKDARA). The ZIM signature appears at 48 to 62 (ASTYGVAVRVQGIAG). The interval 54-67 (AVRVQGIAGQPFVV) is interaction with TJP1/ZO1. The segment at 89–268 (EASGALGSDF…PPSGFSRSRQ (180 aa)) is disordered. Phosphoserine occurs at positions 96, 135, 137, 140, 155, and 165. Residues 166 to 191 (PGSTIDTAPLSSVDSLINKFDSQLGG) are compositionally biased toward polar residues. Basic and acidic residues predominate over residues 207 to 231 (EQRKRSKSLDSRLPRDTLEERERQS). A phosphoserine mark is found at Ser-214, Ser-217, Ser-258, Ser-276, Ser-338, and Ser-351. Over residues 246 to 267 (GSSKQPSQSQSPSPPSGFSRSR) the composition is skewed to low complexity. The stretch at 358-1160 (VAGQGELTRK…SLEKDSWRKA (803 aa)) forms a coiled coil. Lys-579 is modified (N6-acetyllysine). The segment covering 883-903 (ARREVADAQRQAKDWASEAEK) has biased composition (basic and acidic residues). Disordered regions lie at residues 883 to 908 (ARREVADAQRQAKDWASEAEKTSGGL) and 1160 to 1181 (ASRSAAESALKHEGLSSDEEFD). The tract at residues 1161–1203 (SRSAAESALKHEGLSSDEEFDSVYDPSSIASLLTESNLQTSSC) is tail. Phosphoserine is present on residues Ser-1175, Ser-1176, and Ser-1182.

The protein belongs to the cingulin family. Homodimer. Interacts with TJP1/ZO1 and SPEF1.

It localises to the cell junction. The protein resides in the tight junction. Its function is as follows. Probably plays a role in the formation and regulation of the tight junction (TJ) paracellular permeability barrier. The sequence is that of Cingulin from Papio anubis (Olive baboon).